A 365-amino-acid polypeptide reads, in one-letter code: Probable dual-specificity RNA methyltransferase RlmN (365 aa).

Residue glutamate 108 is the Proton acceptor of the active site. One can recognise a Radical SAM core domain in the interval 114–352; sequence YPDRNTVCIS…SCTVRDTRGR (239 aa). The cysteines at positions 121 and 358 are disulfide-linked. Cysteine 128, cysteine 132, and cysteine 135 together coordinate [4Fe-4S] cluster. Residues 179–180, serine 213, 236–238, and asparagine 315 contribute to the S-adenosyl-L-methionine site; these read GE and SLH. The active-site S-methylcysteine intermediate is the cysteine 358.

Belongs to the radical SAM superfamily. RlmN family. It depends on [4Fe-4S] cluster as a cofactor.

The protein localises to the cytoplasm. It carries out the reaction adenosine(2503) in 23S rRNA + 2 reduced [2Fe-2S]-[ferredoxin] + 2 S-adenosyl-L-methionine = 2-methyladenosine(2503) in 23S rRNA + 5'-deoxyadenosine + L-methionine + 2 oxidized [2Fe-2S]-[ferredoxin] + S-adenosyl-L-homocysteine. The enzyme catalyses adenosine(37) in tRNA + 2 reduced [2Fe-2S]-[ferredoxin] + 2 S-adenosyl-L-methionine = 2-methyladenosine(37) in tRNA + 5'-deoxyadenosine + L-methionine + 2 oxidized [2Fe-2S]-[ferredoxin] + S-adenosyl-L-homocysteine. Functionally, specifically methylates position 2 of adenine 2503 in 23S rRNA and position 2 of adenine 37 in tRNAs. The polypeptide is Probable dual-specificity RNA methyltransferase RlmN (Mycolicibacterium vanbaalenii (strain DSM 7251 / JCM 13017 / BCRC 16820 / KCTC 9966 / NRRL B-24157 / PYR-1) (Mycobacterium vanbaalenii)).